A 202-amino-acid chain; its full sequence is MNVKKIYMDADALLEGHFKLSSGNHSQFYLQSAKVLEDPKTAKLLADALALQIKESALEIDTVCAPALGGLIAGFALASALDVRSIFAERVDGVMNLRRGFEIKKGERVLMCEDIITTGGSAMEAAEVVKSLGGEIVGVAALANRGFCKRQNSDVTTKPNCKLPQDIPFFALDDFTFEMYAPEECPMCKSGSEAIKPGSRGN.

Residue 113–121 (EDIITTGGS) coordinates 5-phospho-alpha-D-ribose 1-diphosphate. Threonine 117 and arginine 145 together coordinate orotate.

It belongs to the purine/pyrimidine phosphoribosyltransferase family. PyrE subfamily. In terms of assembly, homodimer. Requires Mg(2+) as cofactor.

The enzyme catalyses orotidine 5'-phosphate + diphosphate = orotate + 5-phospho-alpha-D-ribose 1-diphosphate. Its pathway is pyrimidine metabolism; UMP biosynthesis via de novo pathway; UMP from orotate: step 1/2. In terms of biological role, catalyzes the transfer of a ribosyl phosphate group from 5-phosphoribose 1-diphosphate to orotate, leading to the formation of orotidine monophosphate (OMP). The polypeptide is Orotate phosphoribosyltransferase (Sulfurimonas denitrificans (strain ATCC 33889 / DSM 1251) (Thiomicrospira denitrificans (strain ATCC 33889 / DSM 1251))).